Here is an 87-residue protein sequence, read N- to C-terminus: Polyketide-8 synthase acyl carrier protein 2 (87 aa).

A Carrier domain is found at 8–83 (ALDKEQLREL…GTYELLTSKL (76 aa)). At serine 43 the chain carries O-(pantetheine 4'-phosphoryl)serine.

4'-phosphopantetheine is transferred from CoA to a specific serine of the apo-ACP-like protein.

Its function is as follows. Acyl carrier protein. In Streptomyces avermitilis (strain ATCC 31267 / DSM 46492 / JCM 5070 / NBRC 14893 / NCIMB 12804 / NRRL 8165 / MA-4680), this protein is Polyketide-8 synthase acyl carrier protein 2.